The sequence spans 244 residues: Ubiquinone/menaquinone biosynthesis C-methyltransferase UbiE (244 aa).

S-adenosyl-L-methionine contacts are provided by residues Thr-70, Asp-91, and 117–118; that span reads DA.

This sequence belongs to the class I-like SAM-binding methyltransferase superfamily. MenG/UbiE family.

It carries out the reaction a 2-demethylmenaquinol + S-adenosyl-L-methionine = a menaquinol + S-adenosyl-L-homocysteine + H(+). The catalysed reaction is a 2-methoxy-6-(all-trans-polyprenyl)benzene-1,4-diol + S-adenosyl-L-methionine = a 5-methoxy-2-methyl-3-(all-trans-polyprenyl)benzene-1,4-diol + S-adenosyl-L-homocysteine + H(+). Its pathway is quinol/quinone metabolism; menaquinone biosynthesis; menaquinol from 1,4-dihydroxy-2-naphthoate: step 2/2. It participates in cofactor biosynthesis; ubiquinone biosynthesis. Functionally, methyltransferase required for the conversion of demethylmenaquinol (DMKH2) to menaquinol (MKH2) and the conversion of 2-polyprenyl-6-methoxy-1,4-benzoquinol (DDMQH2) to 2-polyprenyl-3-methyl-6-methoxy-1,4-benzoquinol (DMQH2). This Nitrosospira multiformis (strain ATCC 25196 / NCIMB 11849 / C 71) protein is Ubiquinone/menaquinone biosynthesis C-methyltransferase UbiE.